Here is a 419-residue protein sequence, read N- to C-terminus: Double-stranded RNA-binding protein 1 (419 aa).

DRBM domains lie at 15–84 (VFKS…ELAK) and 101–170 (LCKN…AIQS). A Bipartite nuclear localization motif is present at residues 207–222 (KARKAQFKKKAQKGKR). A run of 6 repeats spans residues 247-274 (EKIE…SVET), 275-302 (EKIE…SVET), 303-330 (EKIE…SVET), 331-358 (EKIE…SVET), 359-386 (EKIE…SVET), and 387-414 (EKIE…SVET). A 6 X 28 AA repeats of E-K-I-E-T-T-P-N-L-E-[PS]-[PS]-S-C-M-[NS]-G-L-K-E-A-A-F-G-S-V-E-T region spans residues 247–414 (EKIETTPNLE…KEAAFGSVET (168 aa)).

As to quaternary structure, homodimer. Heterodimer with DRB2, DRB4 or DRB5. Interacts with SE and DCL1. Interacts with RCF3, RS40 and RS41. As to expression, expressed in rosette and cauline leaves, stems, roots, flowers and siliques.

Its subcellular location is the nucleus. It is found in the nucleus speckle. Its function is as follows. Double-stranded RNA-binding protein involved in RNA-mediated post-transcriptional gene silencing (PTGS). Functions in the microRNAs (miRNAs) biogenesis by assisting DICER-LIKE 1 (DCL1) in the accurate processing from primary miRNAs (pri-miRNAs) to miRNAs in the nucleus. Forms a complex with SERRATE (SE) and DCL1 to promote accurate processing of pri-miRNAs by DCL1. Binds and assist DCL1 for accurate processing of precursor miRNAs (pre-miRNA). Indirectly involved in the production of trans-acting small interfering RNAs (ta-siRNAs) derived from the TAS1, TAS2 or TAS3 endogenous transcripts by participating in the production of their initiating miRNAs. Involved with argonaute 1 (AGO1) in the guide strand selection from miRNA duplexes, presumably by directional loading of the miRNA duplex (guide stand and passenger strand) onto the RNA-induced silencing complex (RISC) for passenger strand degradation. Does not participate in sense transgene-induced post-transcriptional gene silencing (S-PTGS). Involved in several plant development aspects and response to hormones through its role in miRNAs processing. This chain is Double-stranded RNA-binding protein 1 (DRB1), found in Arabidopsis thaliana (Mouse-ear cress).